The primary structure comprises 1091 residues: ATP-dependent helicase/deoxyribonuclease subunit B (1091 aa).

The protein belongs to the helicase family. AddB/RexB type 2 subfamily. In terms of assembly, heterodimer of AddA and RexB. It depends on Mg(2+) as a cofactor.

The heterodimer acts as both an ATP-dependent DNA helicase and an ATP-dependent, dual-direction single-stranded exonuclease. Recognizes the chi site generating a DNA molecule suitable for the initiation of homologous recombination. This subunit has 5' -&gt; 3' nuclease activity but not helicase activity. The chain is ATP-dependent helicase/deoxyribonuclease subunit B from Streptococcus pneumoniae serotype 19F (strain G54).